Here is a 75-residue protein sequence, read N- to C-terminus: MATKKKTFEEAIAELETIVEALENGSASLEDSLDMYQKGIELTKLCQDKLQTAEKRMAKVVTDTGEEIPFEADGE.

It belongs to the XseB family. As to quaternary structure, heterooligomer composed of large and small subunits.

Its subcellular location is the cytoplasm. It catalyses the reaction Exonucleolytic cleavage in either 5'- to 3'- or 3'- to 5'-direction to yield nucleoside 5'-phosphates.. In terms of biological role, bidirectionally degrades single-stranded DNA into large acid-insoluble oligonucleotides, which are then degraded further into small acid-soluble oligonucleotides. The sequence is that of Exodeoxyribonuclease 7 small subunit from Listeria welshimeri serovar 6b (strain ATCC 35897 / DSM 20650 / CCUG 15529 / CIP 8149 / NCTC 11857 / SLCC 5334 / V8).